Consider the following 134-residue polypeptide: Small ribosomal subunit protein bS16 (134 aa).

Positions 115-134 (AKLRRRQAKKAAEAAGSAEG) are disordered.

The protein belongs to the bacterial ribosomal protein bS16 family.

This Chlorobaculum tepidum (strain ATCC 49652 / DSM 12025 / NBRC 103806 / TLS) (Chlorobium tepidum) protein is Small ribosomal subunit protein bS16.